The following is a 271-amino-acid chain: Thiazole synthase (271 aa).

K104 acts as the Schiff-base intermediate with DXP in catalysis. Residues G165, 192–193, and 214–215 each bind 1-deoxy-D-xylulose 5-phosphate; these read AG and NT.

It belongs to the ThiG family. In terms of assembly, homotetramer. Forms heterodimers with either ThiH or ThiS.

The protein resides in the cytoplasm. The enzyme catalyses [ThiS sulfur-carrier protein]-C-terminal-Gly-aminoethanethioate + 2-iminoacetate + 1-deoxy-D-xylulose 5-phosphate = [ThiS sulfur-carrier protein]-C-terminal Gly-Gly + 2-[(2R,5Z)-2-carboxy-4-methylthiazol-5(2H)-ylidene]ethyl phosphate + 2 H2O + H(+). The protein operates within cofactor biosynthesis; thiamine diphosphate biosynthesis. In terms of biological role, catalyzes the rearrangement of 1-deoxy-D-xylulose 5-phosphate (DXP) to produce the thiazole phosphate moiety of thiamine. Sulfur is provided by the thiocarboxylate moiety of the carrier protein ThiS. In vitro, sulfur can be provided by H(2)S. This is Thiazole synthase from Burkholderia lata (strain ATCC 17760 / DSM 23089 / LMG 22485 / NCIMB 9086 / R18194 / 383).